Here is a 333-residue protein sequence, read N- to C-terminus: HTH-type transcriptional regulator CbbR (333 aa).

Residues 5–62 (WTLRQLRLVALAAASGSYAKAAQDMGLSPPAVTAQMKALEEDIGVPMFERVDGRLRPT) enclose the HTH lysR-type domain. A DNA-binding region (H-T-H motif) is located at residues 22–41 (YAKAAQDMGLSPPAVTAQMK).

It belongs to the LysR transcriptional regulatory family.

In terms of biological role, transcriptional activator for the cbb operon (cbbLSXFP) for RuBisCO and other Calvin cycle genes. Binds specifically to two binding sites in the cbbR-cbbL intergenic region. The protein is HTH-type transcriptional regulator CbbR (cbbR) of Xanthobacter flavus.